The primary structure comprises 153 residues: Cytochrome c-type biogenesis protein CcmE (153 aa).

Residues 1 to 7 (MTRKKRR) lie on the Cytoplasmic side of the membrane. Residues 8–28 (LYFVVLGMLALFAAAGLTLTA) traverse the membrane as a helical; Signal-anchor for type II membrane protein segment. Over 29-153 (FQDNLVFFYS…PPTAAAAPAP (125 aa)) the chain is Periplasmic. Residues His-121 and Tyr-125 each contribute to the heme site. Residues 132–153 (ESLKASGKWQHGPPTAAAAPAP) form a disordered region. Over residues 144 to 153 (PPTAAAAPAP) the composition is skewed to low complexity.

The protein belongs to the CcmE/CycJ family.

Its subcellular location is the cell inner membrane. In terms of biological role, heme chaperone required for the biogenesis of c-type cytochromes. Transiently binds heme delivered by CcmC and transfers the heme to apo-cytochromes in a process facilitated by CcmF and CcmH. This chain is Cytochrome c-type biogenesis protein CcmE, found in Rhodospirillum rubrum (strain ATCC 11170 / ATH 1.1.1 / DSM 467 / LMG 4362 / NCIMB 8255 / S1).